Here is a 258-residue protein sequence, read N- to C-terminus: UPF0246 protein Pnap_3166 (258 aa).

This sequence belongs to the UPF0246 family.

The chain is UPF0246 protein Pnap_3166 from Polaromonas naphthalenivorans (strain CJ2).